Reading from the N-terminus, the 231-residue chain is Uracil-DNA glycosylase (231 aa).

Residue Asp-71 is the Proton acceptor of the active site.

This sequence belongs to the uracil-DNA glycosylase (UDG) superfamily. UNG family.

The protein resides in the cytoplasm. It carries out the reaction Hydrolyzes single-stranded DNA or mismatched double-stranded DNA and polynucleotides, releasing free uracil.. Excises uracil residues from the DNA which can arise as a result of misincorporation of dUMP residues by DNA polymerase or due to deamination of cytosine. The chain is Uracil-DNA glycosylase from Pseudomonas aeruginosa (strain ATCC 15692 / DSM 22644 / CIP 104116 / JCM 14847 / LMG 12228 / 1C / PRS 101 / PAO1).